Here is a 129-residue protein sequence, read N- to C-terminus: Ribosome-binding factor A (129 aa).

Belongs to the RbfA family. As to quaternary structure, monomer. Binds 30S ribosomal subunits, but not 50S ribosomal subunits or 70S ribosomes.

The protein localises to the cytoplasm. Its function is as follows. One of several proteins that assist in the late maturation steps of the functional core of the 30S ribosomal subunit. Associates with free 30S ribosomal subunits (but not with 30S subunits that are part of 70S ribosomes or polysomes). Required for efficient processing of 16S rRNA. May interact with the 5'-terminal helix region of 16S rRNA. This Thioalkalivibrio sulfidiphilus (strain HL-EbGR7) protein is Ribosome-binding factor A.